The primary structure comprises 304 residues: D-alanine--D-alanine ligase (304 aa).

The ATP-grasp domain occupies 103 to 299 (KLIWQALGLP…FADLCIEILK (197 aa)). 129–184 (EEKLGLPMFVKPAAEGSSVGVVKVKGKGRLKSVYEELKHLQGEIIAERFIGGGEYS) is a binding site for ATP. Mg(2+) contacts are provided by Asp253, Glu266, and Asn268.

Belongs to the D-alanine--D-alanine ligase family. Requires Mg(2+) as cofactor. Mn(2+) is required as a cofactor.

The protein resides in the cytoplasm. It catalyses the reaction 2 D-alanine + ATP = D-alanyl-D-alanine + ADP + phosphate + H(+). It functions in the pathway cell wall biogenesis; peptidoglycan biosynthesis. In terms of biological role, cell wall formation. The polypeptide is D-alanine--D-alanine ligase (Neisseria meningitidis serogroup C / serotype 2a (strain ATCC 700532 / DSM 15464 / FAM18)).